The following is a 152-amino-acid chain: Protein-export protein SecB (152 aa).

It belongs to the SecB family. In terms of assembly, homotetramer, a dimer of dimers. One homotetramer interacts with 1 SecA dimer.

It is found in the cytoplasm. Functionally, one of the proteins required for the normal export of preproteins out of the cell cytoplasm. It is a molecular chaperone that binds to a subset of precursor proteins, maintaining them in a translocation-competent state. It also specifically binds to its receptor SecA. The polypeptide is Protein-export protein SecB (Rickettsia akari (strain Hartford)).